The chain runs to 147 residues: Ribonuclease VapC43 (147 aa).

Residues 3 to 139 (CVDVNVLVYA…ARFRRLRWRH (137 aa)) enclose the PINc domain. Residues Asp-5 and Asp-108 each coordinate Mg(2+).

Belongs to the PINc/VapC protein family. The cofactor is Mg(2+).

Its function is as follows. Toxic component of a type II toxin-antitoxin (TA) system. An RNase. Its toxic effect is neutralized by coexpression with cognate antitoxin VapB43. The polypeptide is Ribonuclease VapC43 (Mycobacterium tuberculosis (strain CDC 1551 / Oshkosh)).